Here is a 345-residue protein sequence, read N- to C-terminus: Viral Fc-gamma receptor-like protein UL119 (345 aa).

An N-terminal signal peptide occupies residues 1-23 (MCSVLAIALVVALLGDMHPGVKS). The interval 23–42 (SSTTSAVTSPSNTTVTSTTS) is disordered. The Virion surface portion of the chain corresponds to 24-294 (STTSAVTSPS…KSDPLFEDRL (271 aa)). 12 N-linked (GlcNAc...) asparagine; by host glycosylation sites follow: Asn-34, Asn-48, Asn-95, Asn-104, Asn-148, Asn-179, Asn-198, Asn-217, Asn-225, Asn-241, Asn-244, and Asn-260. The Ig-like V-type domain maps to 91-190 (QVSLNATCKV…TWDLFTYPIY (100 aa)). Residues 295 to 317 (LAYGVLAFLVFMVIILLYVTYML) traverse the membrane as a helical segment. Residues 318–345 (ARRRDWSYKRLEEPVEEKKHPVPYFKQW) lie on the Intravirion side of the membrane.

The protein localises to the virion membrane. Its function is as follows. Serves as a receptor for the Fc part of human IgG. May thus be involved in interfering with host Ig-mediated immune responses. The polypeptide is Viral Fc-gamma receptor-like protein UL119 (UL119/UL118) (Human cytomegalovirus (strain AD169) (HHV-5)).